We begin with the raw amino-acid sequence, 818 residues long: SIT4-associating protein SAP4 (818 aa).

Disordered regions lie at residues 33–60 (ETSSTDDKKNEPSMESESEFGTESRDRS) and 499–526 (TSNTLEDKCNNNDSNDSNDNQKQKKNIK). Over residues 509–518 (NNDSNDSNDN) the composition is skewed to low complexity.

The protein belongs to the SAPS family. In terms of processing, hyperphosphorylated in the absence of SIT4.

Associates with the SIT4 phosphatase in a cell cycle dependent manner. May be directly or indirectly involved in SIT4-dependent functions in budding and in normal G1 cyclin expression. The polypeptide is SIT4-associating protein SAP4 (SAP4) (Saccharomyces cerevisiae (strain ATCC 204508 / S288c) (Baker's yeast)).